Reading from the N-terminus, the 389-residue chain is Type 2 DNA topoisomerase 6 subunit A (389 aa).

A Topo IIA-type catalytic domain is found at 12 to 162 (EARRKAANIL…MLILSKEKGK (151 aa)). Y106 acts as the O-(5'-phospho-DNA)-tyrosine intermediate in catalysis. Mg(2+)-binding residues include E209 and D261.

Belongs to the TOP6A family. In terms of assembly, homodimer. Heterotetramer of two Top6A and two Top6B chains. It depends on Mg(2+) as a cofactor.

The catalysed reaction is ATP-dependent breakage, passage and rejoining of double-stranded DNA.. With respect to regulation, not inhibited by the DNA gyrase inhibitor novobiocin, instead inhibited by eukaryotic topoisomerase inhibitors such as m- and o-amsacrine, ellipticine, and the quinolone CP-115,953. Its function is as follows. Relaxes both positive and negative supercoils and exhibits a strong decatenase and unknotting activity; it cannot introduce DNA supercoils. ATP is absolutely required for DNA cleavage; the nonhydrolyzable analog AMP-PNP generates nicked or linear products from a supercoiled dsDNA substrate. Generates staggered two-nucleotide long 5' overhangs. The enzyme is covalently attached transiently to the 5'-ends of the cleaved strands. The protein is Type 2 DNA topoisomerase 6 subunit A of Saccharolobus shibatae (strain ATCC 51178 / DSM 5389 / JCM 8931 / NBRC 15437 / B12) (Sulfolobus shibatae).